A 198-amino-acid polypeptide reads, in one-letter code: Guanylate kinase (198 aa).

Residues 8–188 enclose the Guanylate kinase-like domain; the sequence is GRVVVLSGPS…ACSELVSLLV (181 aa). ATP is bound at residue 15 to 22; it reads GPSAVGKS.

The protein belongs to the guanylate kinase family.

It is found in the cytoplasm. The catalysed reaction is GMP + ATP = GDP + ADP. Functionally, essential for recycling GMP and indirectly, cGMP. The polypeptide is Guanylate kinase (Mycobacterium sp. (strain MCS)).